The chain runs to 404 residues: MLPFQAARQRQFARVITFALAGFVFNTTEFIPVALLSDIAQSFAMPVSQTGLIITVYAWVVSLMSLPFMLLTAKAERRGLLIKLLVLFILSHLLSVIAWDFWVLVLARIGVALTHSIFWAITASLVIRVAPKDKKSQAIGLLAIGCSLAMILGLPLGRLIGQFFGWRATFAIIALIAIGILCLFYQLLPHLPSKNAGSLNSLPTLFKRPLLLGLYALTMIIISAHFTAYSYIEPFMLNISTMSHSMATFVLFVFGLSGITASLLFNRYYNAGPIRFILFSMGLLTATLLLLFIASQQTWTMFLLTFFWGIGIAGIGLGLQIRVLHLAPDATDVAMAIYSGIYNIGIGAGALLGNQVMQHYGLAYIGVAGALFAVFGLVLFILVQWKYGHLAPNKLSTEEKKKCG.

12 consecutive transmembrane segments (helical) span residues 15–35 (VITFALAGFVFNTTEFIPVAL), 51–71 (GLIITVYAWVVSLMSLPFMLL), 85–105 (LVLFILSHLLSVIAWDFWVLV), 109–129 (IGVALTHSIFWAITASLVIRV), 137–157 (QAIGLLAIGCSLAMILGLPLG), 168–188 (ATFAIIALIAIGILCLFYQLL), 209–229 (PLLLGLYALTMIIISAHFTAY), 245–265 (SMATFVLFVFGLSGITASLLF), 276–296 (FILFSMGLLTATLLLLFIASQ), 299–319 (WTMFLLTFFWGIGIAGIGLGL), 333–353 (VAMAIYSGIYNIGIGAGALLG), and 363–383 (AYIGVAGALFAVFGLVLFILV).

It belongs to the major facilitator superfamily. SotB (TC 2.A.1.2) family.

It localises to the cell inner membrane. Involved in the efflux of sugars. The physiological role may be the reduction of the intracellular concentration of toxic sugars or sugar metabolites. This is Probable sugar efflux transporter from Pasteurella multocida (strain Pm70).